Reading from the N-terminus, the 132-residue chain is Small ribosomal subunit protein uS8c (132 aa).

Belongs to the universal ribosomal protein uS8 family. As to quaternary structure, part of the 30S ribosomal subunit.

It is found in the plastid. Its subcellular location is the chloroplast. In terms of biological role, one of the primary rRNA binding proteins, it binds directly to 16S rRNA central domain where it helps coordinate assembly of the platform of the 30S subunit. This Amborella trichopoda protein is Small ribosomal subunit protein uS8c (rps8).